The chain runs to 443 residues: Monooxygenase asqM (443 aa).

Belongs to the aromatic-ring hydroxylase family. It depends on FAD as a cofactor.

The protein operates within secondary metabolite biosynthesis. Its pathway is alkaloid biosynthesis. It functions in the pathway mycotoxin biosynthesis. In terms of biological role, monooxygenase; part of the gene cluster that mediates the biosynthesis of the aspoquinolone mycotoxins. The role of asqM within the aspoquinolone pathway has still to be determined. The first step of the pathway is catalyzed by the nonribosomal peptide synthetase asqK that condenses anthranilic acid and O-methyl-L-tyrosine to produce 4'-methoxycyclopeptin. 4'-methoxycyclopeptin is then converted to 4'-methoxydehydrocyclopeptin by the ketoglutarate-dependent dioxygenase asqJ. AsqJ also converts its first product 4'-methoxydehydrocyclopeptin to 4'-methoxycyclopenin. The following conversion of 4'-methoxycyclopenin into 4'-methoxyviridicatin is catalyzed by the cyclopenase asqI. 4'-methoxyviridicatin is the precursor of quinolone natural products, and is further converted to quinolinone B. The prenyltransferase asqH1 then catalyzes the canonical Friedel-Crafts alkylation of quinolinone B with dimethylallyl cation to yield dimethylallyl quinolone, which is subjected to FAD-dependent dehydrogenation by the FAD-linked oxidoreductase asqF to yield conjugated aryl diene. The delta(3') double bond then serves as the site of the second alkylation with DMAPP catalyzed by the prenyltransferase asqH2 to yield a carbenium ion intermediate, which can be attacked by H(2)O to yield a styrenyl quinolone containing a C3'-hydroxyprenyl chain. The FAD-dependent monooxygenase asqG performs epoxidation of the terminal C7'-C8' olefin. Finally, after dehydratation of the epoxide at C3 by asqC, the quinolone epoxide rearrangement protein asqO catalyzes an enzymatic 3-exo-tet cyclization to yield the cyclopropyl-THF ring system in aspoquinolone. This is Monooxygenase asqM from Emericella nidulans (strain FGSC A4 / ATCC 38163 / CBS 112.46 / NRRL 194 / M139) (Aspergillus nidulans).